We begin with the raw amino-acid sequence, 89 residues long: Small ribosomal subunit protein uS15 (89 aa).

The protein belongs to the universal ribosomal protein uS15 family. Part of the 30S ribosomal subunit. Forms a bridge to the 50S subunit in the 70S ribosome, contacting the 23S rRNA.

One of the primary rRNA binding proteins, it binds directly to 16S rRNA where it helps nucleate assembly of the platform of the 30S subunit by binding and bridging several RNA helices of the 16S rRNA. Its function is as follows. Forms an intersubunit bridge (bridge B4) with the 23S rRNA of the 50S subunit in the ribosome. The chain is Small ribosomal subunit protein uS15 from Prochlorococcus marinus (strain MIT 9312).